The chain runs to 305 residues: Oxygen-dependent coproporphyrinogen-III oxidase (305 aa).

Ser-99 contacts substrate. 2 residues coordinate a divalent metal cation: His-103 and His-113. Residue His-113 is the Proton donor of the active site. 115–117 is a substrate binding site; sequence NVR. A divalent metal cation is bound by residues His-152 and His-182. The important for dimerization stretch occupies residues 247–282; that stretch reads YVEFNLVLDRGTLFGLQTGGRTESILMSMPPLARWE. Substrate is bound at residue 265–267; the sequence is GGR.

The protein belongs to the aerobic coproporphyrinogen-III oxidase family. Homodimer. The cofactor is a divalent metal cation.

The protein resides in the cytoplasm. The enzyme catalyses coproporphyrinogen III + O2 + 2 H(+) = protoporphyrinogen IX + 2 CO2 + 2 H2O. It participates in porphyrin-containing compound metabolism; protoporphyrin-IX biosynthesis; protoporphyrinogen-IX from coproporphyrinogen-III (O2 route): step 1/1. In terms of biological role, involved in the heme biosynthesis. Catalyzes the aerobic oxidative decarboxylation of propionate groups of rings A and B of coproporphyrinogen-III to yield the vinyl groups in protoporphyrinogen-IX. In Vibrio cholerae serotype O1 (strain ATCC 39541 / Classical Ogawa 395 / O395), this protein is Oxygen-dependent coproporphyrinogen-III oxidase.